An 80-amino-acid polypeptide reads, in one-letter code: Small ribosomal subunit protein bS18 (80 aa).

This sequence belongs to the bacterial ribosomal protein bS18 family. Part of the 30S ribosomal subunit. Forms a tight heterodimer with protein bS6.

Functionally, binds as a heterodimer with protein bS6 to the central domain of the 16S rRNA, where it helps stabilize the platform of the 30S subunit. This is Small ribosomal subunit protein bS18 from Staphylococcus carnosus (strain TM300).